The following is a 433-amino-acid chain: Tol-Pal system protein TolB (433 aa).

An N-terminal signal peptide occupies residues 1-21 (MRNLLRGMLVVICCMAGIAAA).

This sequence belongs to the TolB family. As to quaternary structure, the Tol-Pal system is composed of five core proteins: the inner membrane proteins TolA, TolQ and TolR, the periplasmic protein TolB and the outer membrane protein Pal. They form a network linking the inner and outer membranes and the peptidoglycan layer.

It localises to the periplasm. Its function is as follows. Part of the Tol-Pal system, which plays a role in outer membrane invagination during cell division and is important for maintaining outer membrane integrity. The polypeptide is Tol-Pal system protein TolB (Pseudomonas fluorescens (strain ATCC BAA-477 / NRRL B-23932 / Pf-5)).